Here is a 679-residue protein sequence, read N- to C-terminus: DNA ligase (679 aa).

NAD(+) contacts are provided by residues 86-90 (DEAYD) and 129-130 (ST). Lys-167 serves as the catalytic N6-AMP-lysine intermediate. NAD(+)-binding residues include Arg-183, Glu-214, and Lys-326. Zn(2+) is bound by residues Cys-417, Cys-420, Cys-433, and Cys-439. Positions 599-679 (GEKSPISGKT…EAYRQLVSLD (81 aa)) constitute a BRCT domain.

It belongs to the NAD-dependent DNA ligase family. LigA subfamily. Requires Mg(2+) as cofactor. Mn(2+) serves as cofactor.

It carries out the reaction NAD(+) + (deoxyribonucleotide)n-3'-hydroxyl + 5'-phospho-(deoxyribonucleotide)m = (deoxyribonucleotide)n+m + AMP + beta-nicotinamide D-nucleotide.. DNA ligase that catalyzes the formation of phosphodiester linkages between 5'-phosphoryl and 3'-hydroxyl groups in double-stranded DNA using NAD as a coenzyme and as the energy source for the reaction. It is essential for DNA replication and repair of damaged DNA. The sequence is that of DNA ligase from Desulfotalea psychrophila (strain LSv54 / DSM 12343).